The primary structure comprises 573 residues: Urease subunit alpha 2 (573 aa).

A Urease domain is found at 135-573 (GGMDTHVHYI…ISLNQLYFFS (439 aa)). His140, His142, and Lys223 together coordinate Ni(2+). Position 223 is an N6-carboxylysine (Lys223). His225 lines the substrate pocket. Residues His252 and His278 each contribute to the Ni(2+) site. Catalysis depends on His326, which acts as the Proton donor. Asp366 provides a ligand contact to Ni(2+).

It belongs to the metallo-dependent hydrolases superfamily. Urease alpha subunit family. In terms of assembly, heterotrimer of UreA (gamma), UreB (beta) and UreC (alpha) subunits. Three heterotrimers associate to form the active enzyme. Ni cation is required as a cofactor. Post-translationally, carboxylation allows a single lysine to coordinate two nickel ions.

The protein resides in the cytoplasm. It carries out the reaction urea + 2 H2O + H(+) = hydrogencarbonate + 2 NH4(+). Its pathway is nitrogen metabolism; urea degradation; CO(2) and NH(3) from urea (urease route): step 1/1. Its function is as follows. Disrupting the ure2 operon has no effect on urease activity, or pathogen survival in BALB/c mice when inoculated by gavage, but confers slightly enhanced resistance to low pH killing in vitro. In Brucella suis biovar 1 (strain 1330), this protein is Urease subunit alpha 2.